The chain runs to 304 residues: DDRGK domain-containing protein 1 (304 aa).

Residues 1 to 2 lie on the Lumenal side of the membrane; it reads MD. The helical transmembrane segment at 3-23 threads the bilayer; sequence LIILVGIAIALLVVIISLYLL. At 24–304 the chain is on the cytoplasmic side; it reads QKKNSTTEAK…LTPVSAEGSS (281 aa). The segment at 31 to 174 is disordered; sequence EAKPAAAAPQ…AERLAKEERE (144 aa). A compositionally biased stretch (low complexity) spans 53–82; the sequence is RRAQIARNQRNRLRQNAPVAAAAPQAEAPA. The span at 105 to 174 shows a compositional bias: basic and acidic residues; that stretch reads LDEKMGAKKR…AERLAKEERE (70 aa).

It belongs to the DDRGK1 family. Interacts with Atg9; the interaction is transient.

It is found in the endoplasmic reticulum membrane. In terms of biological role, substrate adapter for ufmylation, the covalent attachment of the ubiquitin-like modifier UFM1 to substrate proteins. Required for ufmylation of Atg9; protects the nervous system during aging, possibly by stabilizing Atg9 and supporting its function. This chain is DDRGK domain-containing protein 1, found in Drosophila ananassae (Fruit fly).